The following is a 410-amino-acid chain: Acetate kinase (410 aa).

N7 is a binding site for Mg(2+). K14 contacts ATP. R88 serves as a coordination point for substrate. The active-site Proton donor/acceptor is the D145. ATP contacts are provided by residues 203-207 (HAGNG), 278-280 (DTR), and 326-330 (GIGEN). E379 provides a ligand contact to Mg(2+).

The protein belongs to the acetokinase family. In terms of assembly, homodimer. Mg(2+) is required as a cofactor. It depends on Mn(2+) as a cofactor.

It localises to the cytoplasm. It carries out the reaction acetate + ATP = acetyl phosphate + ADP. The protein operates within metabolic intermediate biosynthesis; acetyl-CoA biosynthesis; acetyl-CoA from acetate: step 1/2. Functionally, catalyzes the formation of acetyl phosphate from acetate and ATP. Can also catalyze the reverse reaction. The protein is Acetate kinase of Chlorante-Aster yellows phytoplasma.